A 614-amino-acid chain; its full sequence is MSVRLSEGAIAAIMQGENVYKPVLQVINTRAIATGNGPPRYRVLMSDGVNTLSSFMLATQLNPLVEEERLSAHCICQVNRFIVNSLKDGRRVVILMDLDVLKTADMVGGTVGNPVPYNEGQGQQRSSAPTANAAPNKPQQQDGNLSVAGSAAPKYHAPSNQFSKASAPSSVKTPGGTQSKVVPIASLNPYQSKWTICARVTQKGQIRTWSNSRGEGKLFSIELVDESGEIRATAFNDQADKFFPLIELNKVYYFTKGNLKTANKQYTAVKNDYEITFNNETSVVPCDDAQHLPSVQFDFVSISDLENTPKDSIVDVIGICKSYEDVTKIVVKASNREVSKRNVHLMDTSGKLVTATLWGNEAEKFDGSRQPVIAIKGARVSDFGGRSLSVLSSSTVVVNPDSPEAFKLRGWFDSEGQLLECASISDVRGGSASGVNTNWKTLYEAKSERLGQGDKADYFSCVGTIVHLRKENCMYQACPSQDCNKKVIDQQNGLYRCEKCDREFPNFKYRMMLLVTIADSLDYQWVTCFQESAEFILGQSATFLGELKDKNEQAFEEVFQNANFNTYEFKIRVKLETYNDESRIKATALDVKPVNYREYSKRLIASIRRNAQLG.

Residues 112–178 form a disordered region; the sequence is GNPVPYNEGQ…SSVKTPGGTQ (67 aa). Polar residues-rich tracts occupy residues 120–130 and 158–178; these read GQGQQRSSAPT and PSNQ…GGTQ. The segment at residues 194–278 is a DNA-binding region (OB); that stretch reads WTICARVTQK…VKNDYEITFN (85 aa). Residues 478 to 500 form a C4-type zinc finger; it reads CPSQDCNKKVIDQQNGLYRCEKC.

It belongs to the replication factor A protein 1 family. As to quaternary structure, component of the heterotrimeric canonical replication protein A complex (RPA).

It localises to the nucleus. The protein resides in the PML body. Its function is as follows. As part of the heterotrimeric replication protein A complex (RPA/RP-A), binds and stabilizes single-stranded DNA intermediates, that form during DNA replication or upon DNA stress. It prevents their reannealing and in parallel, recruits and activates different proteins and complexes involved in DNA metabolism. Thereby, it plays an essential role both in DNA replication and the cellular response to DNA damage. This is Replication protein A 70 kDa DNA-binding subunit (RPA1) from Gallus gallus (Chicken).